The following is a 155-amino-acid chain: Ribosome maturation factor RimP (155 aa).

This sequence belongs to the RimP family.

It is found in the cytoplasm. Required for maturation of 30S ribosomal subunits. The protein is Ribosome maturation factor RimP of Gemmatimonas aurantiaca (strain DSM 14586 / JCM 11422 / NBRC 100505 / T-27).